The primary structure comprises 92 residues: Promotilin (92 aa).

The segment at 12–49 (RMQEKERNRGQKKSLGLQQRSEEVGSLDPTEAAEEEGK) is disordered.

The protein belongs to the motilin family.

The protein localises to the secreted. Functionally, plays an important role in the regulation of interdigestive gastrointestinal motility and indirectly causes rhythmic contraction of duodenal and colonic smooth muscle. The protein is Promotilin (MLN) of Equus caballus (Horse).